A 359-amino-acid chain; its full sequence is UDP-3-O-acylglucosamine N-acyltransferase (359 aa).

Catalysis depends on H247, which acts as the Proton acceptor.

The protein belongs to the transferase hexapeptide repeat family. LpxD subfamily. As to quaternary structure, homotrimer.

It carries out the reaction a UDP-3-O-[(3R)-3-hydroxyacyl]-alpha-D-glucosamine + a (3R)-hydroxyacyl-[ACP] = a UDP-2-N,3-O-bis[(3R)-3-hydroxyacyl]-alpha-D-glucosamine + holo-[ACP] + H(+). It functions in the pathway bacterial outer membrane biogenesis; LPS lipid A biosynthesis. Catalyzes the N-acylation of UDP-3-O-acylglucosamine using 3-hydroxyacyl-ACP as the acyl donor. Is involved in the biosynthesis of lipid A, a phosphorylated glycolipid that anchors the lipopolysaccharide to the outer membrane of the cell. The protein is UDP-3-O-acylglucosamine N-acyltransferase of Chlorobium chlorochromatii (strain CaD3).